A 353-amino-acid chain; its full sequence is 3-dehydroquinate synthase (353 aa).

This sequence belongs to the archaeal-type DHQ synthase family.

It carries out the reaction 2-amino-2,3,7-trideoxy-D-lyxo-hept-6-ulosonate + NAD(+) + H2O = 3-dehydroquinate + NH4(+) + NADH + H(+). In terms of biological role, catalyzes the oxidative deamination and cyclization of 2-amino-3,7-dideoxy-D-threo-hept-6-ulosonic acid (ADH) to yield 3-dehydroquinate (DHQ), which is fed into the canonical shikimic pathway of aromatic amino acid biosynthesis. The protein is 3-dehydroquinate synthase of Nitrosopumilus maritimus (strain SCM1).